The chain runs to 207 residues: Probable GTP-binding protein EngB (207 aa).

The 176-residue stretch at 24–199 folds into the EngB-type G domain; sequence GGYEVAFAGR…RGIVGGWLGL (176 aa). Residues 32–39, 59–63, 77–80, 144–147, and 178–180 contribute to the GTP site; these read GRSNAGKS, GRTQQ, DLPG, TKAD, and YSG. 2 residues coordinate Mg(2+): Ser39 and Thr61.

The protein belongs to the TRAFAC class TrmE-Era-EngA-EngB-Septin-like GTPase superfamily. EngB GTPase family. Requires Mg(2+) as cofactor.

Functionally, necessary for normal cell division and for the maintenance of normal septation. This Xanthomonas oryzae pv. oryzae (strain MAFF 311018) protein is Probable GTP-binding protein EngB.